A 703-amino-acid polypeptide reads, in one-letter code: ABC transporter G family member 11 (703 aa).

In terms of domain architecture, ABC transporter spans 50–293 (LTWQDLTVMV…FAQAGFPCPA (244 aa)). Position 87-94 (87-94 (GPSGSGKS)) interacts with ATP. One can recognise an ABC transmembrane type-2 domain in the interval 382-594 (LQTYTLTKRS…ALQGQYQNDL (213 aa)). The N-linked (GlcNAc...) asparagine glycan is linked to asparagine 394. A run of 6 helical transmembrane segments spans residues 406 to 426 (LLIY…VGTS), 436 to 456 (CASF…PSFV), 485 to 505 (TPFL…MVGL), 513 to 533 (LFFV…MMAI), 540 to 560 (FLMG…VSGF), and 628 to 648 (INLS…FIMI). Asparagine 671 and asparagine 675 each carry an N-linked (GlcNAc...) asparagine glycan. The residue at position 688 (serine 688) is a Phosphoserine.

Belongs to the ABC transporter superfamily. ABCG family. Eye pigment precursor importer (TC 3.A.1.204) subfamily. In terms of assembly, homodimer. Forms heterodimers with ABCG9, ABCG12 and ABCG14 in epidermal cells. Expressed in seedlings, roots, stems, leaves, flowers, and siliques, mostly in epidermis, trichomes, vasculatures and developing tissues. Follows an uniparental maternal expression in the seed, thus being the product of a maternally expressed imprinted gene. Accumulates in the phloem. Transcripts seem to be transported from shoots to roots.

It is found in the cell membrane. Its function is as follows. Required for the cuticle, root suberin and pollen coat development by controlling cutin and maybe wax transport to the extracellular matrix. Involved in developmental plasticity and stress responses. Together with ABCG9 and ABCG14, required for vascular development by regulating lipid/sterol homeostasis. May be a transporter of lignin precursors during tracheary element differentiation. The polypeptide is ABC transporter G family member 11 (Arabidopsis thaliana (Mouse-ear cress)).